The following is a 121-amino-acid chain: Large ribosomal subunit protein uL14 (121 aa).

The protein belongs to the universal ribosomal protein uL14 family. As to quaternary structure, part of the 50S ribosomal subunit. Forms a cluster with proteins L3 and L19. In the 70S ribosome, L14 and L19 interact and together make contacts with the 16S rRNA in bridges B5 and B8.

Its function is as follows. Binds to 23S rRNA. Forms part of two intersubunit bridges in the 70S ribosome. This chain is Large ribosomal subunit protein uL14, found in Legionella pneumophila (strain Corby).